The following is a 578-amino-acid chain: Adhesion G protein-coupled receptor A1 (578 aa).

At 1–22 (MTQWDLKTVLSLPQYPGEFLHP) the chain is on the extracellular side. The chain crosses the membrane as a helical span at residues 23–43 (VVYACTAVMLLCLLASVITYI). Topologically, residues 44 to 56 (LHQSAIRISRKGR) are cytoplasmic. A helical membrane pass occupies residues 57–77 (HALLNFCFHAALTFTVFAGGI). Over 78–87 (NRTQHPILCQ) the chain is Extracellular. The chain crosses the membrane as a helical span at residues 88-108 (AVGIALHYSTLSTMLWIGVTA). The Cytoplasmic portion of the chain corresponds to 109–137 (RNIYKQVTKKALPCPGADQPPYPKQPLLR). A helical membrane pass occupies residues 138–158 (FYLISGGVPFIICGVTAATNI). The Extracellular segment spans residues 159–178 (RNYGTEDEDVAYCWMAWEPS). The helical transmembrane segment at 179 to 199 (LGAFYGPAAFIALVTCVYFLC) threads the bilayer. The Cytoplasmic segment spans residues 200 to 262 (TYVQLRRHPE…NEHSFKAQLR (63 aa)). The interval 216 to 236 (ERTEEQQRLAVPESGHRHGVR) is disordered. A helical transmembrane segment spans residues 263–283 (AAAFTLFLFTATWTFGALAVS). Topologically, residues 284 to 289 (QGHFLD) are extracellular. Residues 290-310 (MIFSCLYGAFCVTLGLFVLIH) form a helical membrane-spanning segment. Disordered stretches follow at residues 463–486 (PSSLDGSPHSSRSESPTSSLEGPM) and 537–578 (SLPF…ETTV). Residues 469 to 481 (SPHSSRSESPTSS) show a composition bias toward low complexity. Positions 537–548 (SLPFGGPSQNGL) are enriched in polar residues.

Belongs to the G-protein coupled receptor 2 family. Adhesion G-protein coupled receptor (ADGR) subfamily. As to expression, predominantly expressed in CNS.

It localises to the membrane. This is Adhesion G protein-coupled receptor A1 from Mus musculus (Mouse).